We begin with the raw amino-acid sequence, 302 residues long: tRNA dimethylallyltransferase (302 aa).

Residue Gly-9 to Ser-16 coordinates ATP. A substrate-binding site is contributed by Thr-11–Ser-16. The interaction with substrate tRNA stretch occupies residues Asp-34–Gln-37.

This sequence belongs to the IPP transferase family. As to quaternary structure, monomer. Requires Mg(2+) as cofactor.

The enzyme catalyses adenosine(37) in tRNA + dimethylallyl diphosphate = N(6)-dimethylallyladenosine(37) in tRNA + diphosphate. In terms of biological role, catalyzes the transfer of a dimethylallyl group onto the adenine at position 37 in tRNAs that read codons beginning with uridine, leading to the formation of N6-(dimethylallyl)adenosine (i(6)A). This Nostoc punctiforme (strain ATCC 29133 / PCC 73102) protein is tRNA dimethylallyltransferase.